Reading from the N-terminus, the 216-residue chain is Ribonuclease HII (216 aa).

An RNase H type-2 domain is found at 33–216 (WPVAGADEAG…RMSFRPFRQV (184 aa)). The a divalent metal cation site is built by Asp-39, Glu-40, and Asp-130.

Belongs to the RNase HII family. Requires Mn(2+) as cofactor. It depends on Mg(2+) as a cofactor.

The protein localises to the cytoplasm. It carries out the reaction Endonucleolytic cleavage to 5'-phosphomonoester.. Its function is as follows. Endonuclease that specifically degrades the RNA of RNA-DNA hybrids. This is Ribonuclease HII from Rhizobium meliloti (strain 1021) (Ensifer meliloti).